Here is a 180-residue protein sequence, read N- to C-terminus: Probable phospholipid hydroperoxide glutathione peroxidase (180 aa).

The active site involves Cys-54.

It belongs to the glutathione peroxidase family.

The protein localises to the cytoplasm. It catalyses the reaction a hydroperoxy polyunsaturated fatty acid + 2 glutathione = a hydroxy polyunsaturated fatty acid + glutathione disulfide + H2O. Protects cells and enzymes from oxidative damage, by catalyzing the reduction of hydrogen peroxide, lipid peroxides and organic hydroperoxide, by glutathione. This chain is Probable phospholipid hydroperoxide glutathione peroxidase (GPXHA-2), found in Helianthus annuus (Common sunflower).